The primary structure comprises 111 residues: Large ribosomal subunit protein uL22 (111 aa).

Belongs to the universal ribosomal protein uL22 family. As to quaternary structure, part of the 50S ribosomal subunit.

Functionally, this protein binds specifically to 23S rRNA; its binding is stimulated by other ribosomal proteins, e.g. L4, L17, and L20. It is important during the early stages of 50S assembly. It makes multiple contacts with different domains of the 23S rRNA in the assembled 50S subunit and ribosome. The globular domain of the protein is located near the polypeptide exit tunnel on the outside of the subunit, while an extended beta-hairpin is found that lines the wall of the exit tunnel in the center of the 70S ribosome. In Protochlamydia amoebophila (strain UWE25), this protein is Large ribosomal subunit protein uL22.